A 341-amino-acid chain; its full sequence is NADH-ubiquinone oxidoreductase chain 2 (341 aa).

9 consecutive transmembrane segments (helical) span residues 8–28, 60–80, 95–115, 121–141, 146–166, 195–215, 238–258, 273–293, and 321–341; these read ILFITIMIIGTLITVTSNSWL, YFLTQVLASTVLLFSSILLML, MIIMSALLLKSGAAPFHFWFP, LTWMNALMLMTWQKIAPLMLI, IKYLLLISVILSVIIGAIGGL, SIWLIYFFFYSFLSFVLTFMF, FTLFMNFLSLGGLPPFLGFLP, FMLTLMMMSTLITLFFYLRIC, and MIMTFFSIFGLFLISLFYFMF.

Belongs to the complex I subunit 2 family.

The protein localises to the mitochondrion inner membrane. It carries out the reaction a ubiquinone + NADH + 5 H(+)(in) = a ubiquinol + NAD(+) + 4 H(+)(out). Its function is as follows. Core subunit of the mitochondrial membrane respiratory chain NADH dehydrogenase (Complex I) that is believed to belong to the minimal assembly required for catalysis. Complex I functions in the transfer of electrons from NADH to the respiratory chain. The immediate electron acceptor for the enzyme is believed to be ubiquinone. The chain is NADH-ubiquinone oxidoreductase chain 2 (mt:ND2) from Drosophila melanogaster (Fruit fly).